The primary structure comprises 154 residues: Probable chemoreceptor glutamine deamidase CheD (154 aa).

It belongs to the CheD family.

The enzyme catalyses L-glutaminyl-[protein] + H2O = L-glutamyl-[protein] + NH4(+). Its function is as follows. Probably deamidates glutamine residues to glutamate on methyl-accepting chemotaxis receptors (MCPs), playing an important role in chemotaxis. This is Probable chemoreceptor glutamine deamidase CheD from Methanococcus maripaludis (strain DSM 14266 / JCM 13030 / NBRC 101832 / S2 / LL).